A 276-amino-acid polypeptide reads, in one-letter code: Undecaprenyl-diphosphatase (276 aa).

A run of 8 helical transmembrane segments spans residues 1-21 (MELYQGVVLGVLQGLTEFLPV), 40-60 (ALSFDISVHLGTLFAVALVFF), 93-113 (VRLAALIIVGSIPTAVIGLIL), 120-140 (LFSSLVIVGSMLMVTGTFLWL), 154-174 (IGFGTALFIGVCQGVAVIPGI), 199-219 (FLLSMPAIAGAEILSLKESFA), 227-247 (VTLLSTLTAFIVGTLALVALL), and 255-275 (FYLFAPYCWVVGLISIIAGFV).

Belongs to the UppP family.

The protein resides in the cell inner membrane. The enzyme catalyses di-trans,octa-cis-undecaprenyl diphosphate + H2O = di-trans,octa-cis-undecaprenyl phosphate + phosphate + H(+). Functionally, catalyzes the dephosphorylation of undecaprenyl diphosphate (UPP). Confers resistance to bacitracin. In Desulforapulum autotrophicum (strain ATCC 43914 / DSM 3382 / VKM B-1955 / HRM2) (Desulfobacterium autotrophicum), this protein is Undecaprenyl-diphosphatase.